We begin with the raw amino-acid sequence, 1320 residues long: Probable inactive ATP-dependent zinc metalloprotease FTSHI 5, chloroplastic (1320 aa).

The N-terminal 43 residues, 1–43, are a transit peptide targeting the chloroplast; it reads MDFISASSLSSPFSTQLSPIYLSSGIVSLKPRHRVKNRNFGSR. Helical transmembrane passes span 571 to 591, 633 to 653, and 695 to 715; these read LYLK…WIPM, NIND…IIPY, and FQWF…LYHV. Residue 824–831 coordinates ATP; that stretch reads GERGTGKT.

It in the N-terminal section; belongs to the AAA ATPase family. In the C-terminal section; belongs to the peptidase M41 family. As to quaternary structure, oligomer.

It is found in the plastid. The protein resides in the chloroplast membrane. Its function is as follows. Required for plastid development during embryogenesis. Might be involved in chaperone functions or play a structural role in the thylakoid FtsH complex. This chain is Probable inactive ATP-dependent zinc metalloprotease FTSHI 5, chloroplastic, found in Arabidopsis thaliana (Mouse-ear cress).